A 467-amino-acid chain; its full sequence is Argininosuccinate lyase (467 aa).

Belongs to the lyase 1 family. Argininosuccinate lyase subfamily.

Its subcellular location is the cytoplasm. It catalyses the reaction 2-(N(omega)-L-arginino)succinate = fumarate + L-arginine. Its pathway is amino-acid biosynthesis; L-arginine biosynthesis; L-arginine from L-ornithine and carbamoyl phosphate: step 3/3. This is Argininosuccinate lyase from Sinorhizobium fredii (strain NBRC 101917 / NGR234).